The sequence spans 337 residues: Ornithine carbamoyltransferase, catabolic (337 aa).

Residues S57–T60, Q84, R108, and H135–Q138 contribute to the carbamoyl phosphate site. Residues N167, D231, and S235 to M236 each bind L-ornithine. Residues C272 to L273 and R317 each bind carbamoyl phosphate.

It belongs to the aspartate/ornithine carbamoyltransferase superfamily. OTCase family.

It localises to the cytoplasm. The enzyme catalyses carbamoyl phosphate + L-ornithine = L-citrulline + phosphate + H(+). It participates in amino-acid degradation; L-arginine degradation via ADI pathway; carbamoyl phosphate from L-arginine: step 2/2. Functionally, reversibly catalyzes the transfer of the carbamoyl group from carbamoyl phosphate (CP) to the N(epsilon) atom of ornithine (ORN) to produce L-citrulline. The protein is Ornithine carbamoyltransferase, catabolic (arcB) of Streptococcus pyogenes serotype M1.